Consider the following 328-residue polypeptide: MSSTSQVALLPKLSLPDGVTVWDGTALEYERRCNNIDEHAVHLMQTINILGIRSKEAQCLNTVLTSVARLRENRQARVYLLCQDGYGVGILKMGVKKLFVTHPSYSSLVEIDPLCVLDFFVDTSFQRKGFGKTLFDAMLLNEGLNPGEVAIDRPSVKFLAFLRKYYGLVEYTPQSNNFVVFHRYFDKWQPQRGKGHRGGNAVPTRSIVRPQNCLRVYPEYQSTTGPNDNFEEDATHRTPPPPLPPPLVPQGSVNSPGPGKKTAYELQYEEYLREQAYRRRQGGDPRLQPVPNPVSSSEIAAASCGARRRMSPTRSGVQYNIISGTPEH.

Residues 5-185 (SQVALLPKLS…NNFVVFHRYF (181 aa)) enclose the N-acetyltransferase domain. Residues 119–132 (FFVD…GFGK) and 155–164 (SVKFLAFLRK) each bind acetyl-CoA. 2 disordered regions span residues 219-261 (EYQS…PGKK) and 282-328 (GGDP…TPEH). Positions 238 to 248 (TPPPPLPPPLV) are enriched in pro residues. Polar residues predominate over residues 312–328 (PTRSGVQYNIISGTPEH).

This sequence belongs to the acetyltransferase ATAT1 family.

The enzyme catalyses L-lysyl-[alpha-tubulin] + acetyl-CoA = N(6)-acetyl-L-lysyl-[alpha-tubulin] + CoA + H(+). In terms of biological role, specifically acetylates 'Lys-40' in alpha-tubulin on the lumenal side of microtubules. Promotes microtubule destabilization and accelerates microtubule dynamics; this activity may be independent of acetylation activity. Acetylates alpha-tubulin with a slow enzymatic rate, due to a catalytic site that is not optimized for acetyl transfer. Enters the microtubule through each end and diffuses quickly throughout the lumen of microtubules. Acetylates only long/old microtubules because of its slow acetylation rate since it does not have time to act on dynamically unstable microtubules before the enzyme is released. This chain is Alpha-tubulin N-acetyltransferase 2, found in Trypanosoma cruzi (strain CL Brener).